The primary structure comprises 571 residues: Dihydroxy-acid dehydratase (571 aa).

Cys-56 provides a ligand contact to [2Fe-2S] cluster. Asp-88 contacts Mg(2+). Cys-129 lines the [2Fe-2S] cluster pocket. The Mg(2+) site is built by Asp-130 and Lys-131. The residue at position 131 (Lys-131) is an N6-carboxylysine. Cys-201 provides a ligand contact to [2Fe-2S] cluster. A Mg(2+)-binding site is contributed by Glu-452. Ser-478 functions as the Proton acceptor in the catalytic mechanism.

It belongs to the IlvD/Edd family. In terms of assembly, homodimer. [2Fe-2S] cluster serves as cofactor. The cofactor is Mg(2+).

The enzyme catalyses (2R)-2,3-dihydroxy-3-methylbutanoate = 3-methyl-2-oxobutanoate + H2O. The catalysed reaction is (2R,3R)-2,3-dihydroxy-3-methylpentanoate = (S)-3-methyl-2-oxopentanoate + H2O. Its pathway is amino-acid biosynthesis; L-isoleucine biosynthesis; L-isoleucine from 2-oxobutanoate: step 3/4. It functions in the pathway amino-acid biosynthesis; L-valine biosynthesis; L-valine from pyruvate: step 3/4. Its function is as follows. Functions in the biosynthesis of branched-chain amino acids. Catalyzes the dehydration of (2R,3R)-2,3-dihydroxy-3-methylpentanoate (2,3-dihydroxy-3-methylvalerate) into 2-oxo-3-methylpentanoate (2-oxo-3-methylvalerate) and of (2R)-2,3-dihydroxy-3-methylbutanoate (2,3-dihydroxyisovalerate) into 2-oxo-3-methylbutanoate (2-oxoisovalerate), the penultimate precursor to L-isoleucine and L-valine, respectively. This is Dihydroxy-acid dehydratase from Streptococcus mutans serotype c (strain ATCC 700610 / UA159).